Reading from the N-terminus, the 468-residue chain is uncharacterized protein (468 aa).

The region spanning 1–69 (MKKYQQLAEQ…PQSGYYVAPQ (69 aa)) is the HTH gntR-type domain. N6-(pyridoxal phosphate)lysine is present on Lys312.

It in the C-terminal section; belongs to the class-I pyridoxal-phosphate-dependent aminotransferase family.

This is an uncharacterized protein from Escherichia coli (strain K12).